Consider the following 103-residue polypeptide: Small ribosomal subunit protein uS10 (103 aa).

The protein belongs to the universal ribosomal protein uS10 family. Part of the 30S ribosomal subunit.

Involved in the binding of tRNA to the ribosomes. This Campylobacter fetus subsp. fetus (strain 82-40) protein is Small ribosomal subunit protein uS10.